The chain runs to 526 residues: Plant intracellular Ras-group-related LRR protein 5 (526 aa).

LRR repeat units follow at residues 229-252, 253-275, 276-297, 298-321, 323-344, 346-367, 368-390, 391-414, 416-437, 438-463, and 465-484; these read LSSL…IGGL, ISLT…IGDL, LNLV…SFNR, LIHL…IGSL, SLKK…ISGC, SMEE…VGKL, STLE…MSSM, ANLK…CYAK, LVKL…LIGN, LEKL…TLSN, and RVLQ…ITEK. The short motif at 485-492 is the GVYW; degenerate element; the sequence is GAQAVVQY.

Belongs to the SHOC2 family. In terms of tissue distribution, widely expressed but preferentially in roots.

Its function is as follows. Leucine-rich repeat protein that likely mediates protein interactions, possibly in the context of signal transduction. The sequence is that of Plant intracellular Ras-group-related LRR protein 5 (PIRL5) from Arabidopsis thaliana (Mouse-ear cress).